A 221-amino-acid polypeptide reads, in one-letter code: Anti-sigma-W factor RsiW (221 aa).

Residues 1 to 87 (MKTCHSHDEL…AKWKLKAKRH (87 aa)) are Cytoplasmic-facing. The Zn(2+) site is built by His30, Cys34, and Cys37. A helical transmembrane segment spans residues 88–108 (PILVAAAIFLIMMSAAFFSAW). Topologically, residues 109-221 (SHTTDGIAVS…GEDDPHSTDN (113 aa)) are extracellular.

Belongs to the zinc-associated anti-sigma factor (ZAS) superfamily. Anti-sigma-W factor family. Requires Zn(2+) as cofactor. In terms of processing, is processed by three successive proteolytic events. First, the extracellular region of RsiW is cleaved by PrsW (Site-1 cleavage) in response to cell envelope stresses. Next, it undergoes cleavage at an intramembrane site (Site-2 cleavage) mediated by RasP. This cleavage uncovers a cryptic proteolytic tag with conserved alanine residues in the transmembrane segment, that is recognized mainly by the ClpXP protease, which completely degrades the protein in the cytoplasm and leads to the induction of the sigma-W-controlled genes.

It is found in the membrane. Is the anti-sigma factor for SigW. The presence of RsiW leads to the inactivation of SigW, and its proteolytic destruction to sigma-W activation. This chain is Anti-sigma-W factor RsiW (rsiW), found in Shouchella clausii (strain KSM-K16) (Alkalihalobacillus clausii).